Consider the following 307-residue polypeptide: B3 domain-containing protein At5g18000 (307 aa).

Positions 20–115 form a DNA-binding region, TF-B3 1; it reads FFKILRREDH…CFNVTIFEAD (96 aa). Disordered regions lie at residues 122 to 141 and 151 to 209; these read PRKTITSSSGRNKREERKSI and IESW…SEAG. Residues 166–177 are compositionally biased toward polar residues; it reads ESTSGRLTQKQE. A compositionally biased stretch (basic and acidic residues) spans 178-192; sequence LNLRKKEADKTEKSK. The TF-B3 2 DNA-binding region spans 214–307; the sequence is IPEFKLTIKK…TEMRVKVSKE (94 aa).

It localises to the nucleus. This Arabidopsis thaliana (Mouse-ear cress) protein is B3 domain-containing protein At5g18000.